A 452-amino-acid polypeptide reads, in one-letter code: NADH-ubiquinone oxidoreductase chain 4 (452 aa).

14 helical membrane-spanning segments follow: residues 4-24 (LVLGYVGLVIGVIVTKKSMVW), 29-49 (VGSVLLMLPATVLVNMNMTIS), 59-79 (FVSLGLTVLSIWLLPLMLLAS), 88-110 (LIYQRVFVGCQVFLTGALVLAFM), 114-136 (LLLFYIAFESTLLPTLMLITRWG), 144-164 (AGTYFMFFTLVGSLPLLICLI), 182-202 (VFQLSYLVNFWWVGCILAFLV), 221-241 (PIAGSMVLAGVLLKLGGYGMM), 252-272 (MLSSEVFLALALWGIVVMGGI), 282-304 (LIAYSSVGHMALVVGGVLTGVAW), 309-331 (AMVLMIAHGLVSSCLFCLANLWY), 345-365 (LIMIFPLISSGWFLMSLMNMA), 390-410 (IVYMSLGAVLTAAYSLYLFGM), and 432-452 (LLTTLHLVPAIYLIFYLGLMF).

It belongs to the complex I subunit 4 family.

It localises to the mitochondrion membrane. The enzyme catalyses a ubiquinone + NADH + 5 H(+)(in) = a ubiquinol + NAD(+) + 4 H(+)(out). Core subunit of the mitochondrial membrane respiratory chain NADH dehydrogenase (Complex I) that is believed to belong to the minimal assembly required for catalysis. Complex I functions in the transfer of electrons from NADH to the respiratory chain. The immediate electron acceptor for the enzyme is believed to be ubiquinone. The chain is NADH-ubiquinone oxidoreductase chain 4 (ND4) from Branchiostoma floridae (Florida lancelet).